We begin with the raw amino-acid sequence, 512 residues long: MHPLWAFLLGLSLTNGLSANCPGRCSCDSMQSVQCYRLMELPSGIPSTTKRLYISHSRIQHLQLSNFTGLLALEDFILLASGTESIENDTFKTLSTLKTLELWKNKLRQVPSALPANLEVLKLNDNAICALRGSEFEGLKNLKVLELKNNLISSLSPSMLSPLASLQSLMVDGNNIESVVGPLSLPHLKYMSMENNQLHLIPGNVFTSLQNLQFLSFSGNFLTKIPINLPKSLLSLKMERNQLKVVRFRDMKHLENLSHLYLSENFLSSIDGAQQLTNLTTLEVSQNQLQMLPPRLPSRLQKLDCSSNFIQRVTAPEFQDLRDLKHLFLDNNVVSLFEAGALQRCSQLSNLALEQNLLLSIPLRLPKTLARLDLKGNAIQDMAERELRDLKQLQVLNLRNNRISALDFKALEGLPRLRHLYLDGNPWNCTCSLLRAREVLKAKGTDVKGGQCAAPAERQGESWMSSKKILRQCEHHLQQSEKSKETKKKPKPEDSSSIRLNMDDDDDDYEID.

The N-terminal stretch at Met-1 to Ala-19 is a signal peptide. Residues Asn-20–Gly-44 enclose the LRRNT domain. LRR repeat units lie at residues Ile-45–Gly-69, Leu-71–Thr-93, Leu-94–Asn-117, Glu-119–Gly-138, Leu-139–Pro-162, Ala-164–Leu-185, Pro-186–Ser-208, Gln-210–Ser-232, Leu-234–His-253, Leu-254–Leu-276, Thr-277–Arg-299, Gln-301–Asp-320, Leu-321–Arg-344, Ser-346–Arg-371, Asp-373–Asp-389, Leu-390–Gly-413, and Pro-415–Ala-442. Asn-66 carries N-linked (GlcNAc...) asparagine glycosylation. The segment covering Glu-474–Lys-484 has biased composition (basic and acidic residues). The tract at residues Glu-474–Asp-512 is disordered. Acidic residues predominate over residues Asp-503 to Asp-512.

The protein belongs to the small leucine-rich proteoglycan (SLRP) family. In terms of processing, N-glycosylated. In terms of tissue distribution, expressed at highest levels in the kidney, where it is primarily detected in the epithelial cells of distal tubules and collecting ducts, and more weakly in proximal epithelial cells. Expressed at lower levels in heart and lung (at protein level). Detected in skeletal muscle.

It localises to the secreted. Functionally, may inhibit TGF-beta signaling. The polypeptide is Nephrocan (Mus musculus (Mouse)).